Consider the following 364-residue polypeptide: Peptide chain release factor 1 (364 aa).

Q230 carries the post-translational modification N5-methylglutamine.

This sequence belongs to the prokaryotic/mitochondrial release factor family. Post-translationally, methylated by PrmC. Methylation increases the termination efficiency of RF1.

It is found in the cytoplasm. Functionally, peptide chain release factor 1 directs the termination of translation in response to the peptide chain termination codons UAG and UAA. The chain is Peptide chain release factor 1 from Acidothermus cellulolyticus (strain ATCC 43068 / DSM 8971 / 11B).